A 524-amino-acid chain; its full sequence is RNA-binding protein 39 (524 aa).

A disordered region spans residues 1 to 146; it reads MADDIDIEAM…PVREPIDNLT (146 aa). The residue at position 2 (Ala-2) is an N-acetylalanine. Residues 14-32 show a composition bias toward basic and acidic residues; the sequence is PYKKDENKLSSANGHEERS. Composition is skewed to basic residues over residues 33 to 56 and 64 to 95; these read KKRK…KERK and KKSK…RGRY. At Tyr-95 the chain carries Phosphotyrosine. Phosphoserine occurs at positions 97 and 100. Lys-111 is covalently cross-linked (Glycyl lysine isopeptide (Lys-Gly) (interchain with G-Cter in SUMO2)). Residue Ser-117 is modified to Phosphoserine. Lys-119 is covalently cross-linked (Glycyl lysine isopeptide (Lys-Gly) (interchain with G-Cter in SUMO2)). The span at 119–130 shows a compositional bias: basic residues; the sequence is KLSRRRSRSKSP. A phosphoserine mark is found at Ser-121 and Ser-136. The segment covering 131–146 has biased composition (basic and acidic residues); the sequence is FRKDKSPVREPIDNLT. Thr-146 carries the post-translational modification Phosphothreonine. One can recognise an RRM 1 domain in the interval 153–230; the sequence is RTVFCMQLAA…VPIIVQASQA (78 aa). Residue Lys-244 forms a Glycyl lysine isopeptide (Lys-Gly) (interchain with G-Cter in SUMO2) linkage. In terms of domain architecture, RRM 2 spans 250–328; it reads MRLYVGSLHF…RPMKVGHVTE (79 aa). The interval 291-355 is activating domain; the sequence is KGYGFITFSD…RTGIDLGTTG (65 aa). The interaction with JUN stretch occupies residues 291–400; the sequence is KGYGFITFSD…ADLQTRLSQQ (110 aa). Phosphoserine occurs at positions 334, 337, and 341. Residues 355 to 400 are interaction with ESR1 and ESR2; that stretch reads GRLQLMARLAEGTGLQIPPAAQQALQMSGSLAFGAVADLQTRLSQQ. Positions 400 to 524 are interaction with NCOA6; it reads QTEASALAAA…ATQLLVPSRR (125 aa). In terms of domain architecture, RRM 3 spans 439–502; the sequence is EIKDDVIEEC…KMITAAYVPL (64 aa).

It belongs to the splicing factor SR family. As to quaternary structure, interacts with NCOA6 and JUN. Interacts with ESR1 and ESR2, in the presence of estradiol (E2). Interacts with RSRC1 (via Arg/Ser-rich domain). Interacts with SF3B1. Interacts with ZNF106 (via N-terminus).

It localises to the nucleus speckle. RNA-binding protein that acts as a pre-mRNA splicing factor. Acts by promoting exon inclusion via regulation of exon cassette splicing. Also acts as a transcriptional coactivator for steroid nuclear receptors ESR1/ER-alpha and ESR2/ER-beta, and JUN/AP-1, independently of the pre-mRNA splicing factor activity. In Pongo abelii (Sumatran orangutan), this protein is RNA-binding protein 39 (RBM39).